The sequence spans 31 residues: Nemertide alpha-6 (31 aa).

Intrachain disulfides connect C2–C16, C9–C20, and C15–C26. 2 positions are modified to 4-hydroxyproline: P28 and P29.

It belongs to the nemertide family. As to expression, confined to the epidermis and to the mucus layer.

It localises to the secreted. Highly potent toxin against both insect and some mammalian sodium channels (Nav). It potently inhibits inactivation of insect sodium channels of B.germanica (BgNav1) (EC(50)=2.6 nM) and also delays the inactivation of mammalian Nav with potent activity on Nav1.1/SCN1A (hNav1.1/SCN1A; EC(50)=7.9 nM, rNav1.2/SCN2A; EC(50)=24.3 nM, rNav1.3/SCN3A; EC(50)=105.6 nM, rNav1.4/SCN4A; EC(50)=46.4 nM, hNav1.5/SCN5A; EC(50)=215.2 nM, mNav1.6/SCN8A; EC(50)=36.3 nM, hNav1.9/SCN9A; EC(50)=97.2 nM). 1 uM is enough to completely inhibits the inactivation, resulting in sustained non-inactivating currents. In addition, the toxin significantly enhances the recovery from inactivation, and the open state is not required for the toxin to interact with the channel. In vivo, injection into brine shrimp (Artemia salina) stops movement or causes death after 24 hours (EC(50)=2.8 uM). The chain is Nemertide alpha-6 from Lineus sanguineus (Ribbon worm).